The following is a 510-amino-acid chain: Ribose import ATP-binding protein RbsA 1 (510 aa).

ABC transporter domains follow at residues 20–256 (LEMR…VGRD) and 266–510 (VTLG…TGNA). Residue 52–59 (GENGAGKS) participates in ATP binding.

Belongs to the ABC transporter superfamily. Ribose importer (TC 3.A.1.2.1) family. In terms of assembly, the complex is composed of an ATP-binding protein (RbsA), two transmembrane proteins (RbsC) and a solute-binding protein (RbsB).

Its subcellular location is the cell inner membrane. It catalyses the reaction D-ribose(out) + ATP + H2O = D-ribose(in) + ADP + phosphate + H(+). Functionally, part of the ABC transporter complex RbsABC involved in ribose import. Responsible for energy coupling to the transport system. The protein is Ribose import ATP-binding protein RbsA 1 of Agrobacterium fabrum (strain C58 / ATCC 33970) (Agrobacterium tumefaciens (strain C58)).